The sequence spans 261 residues: Sulfur carrier protein FdhD (261 aa).

Cysteine 105 acts as the Cysteine persulfide intermediate in catalysis. 245 to 250 (FIRGDR) lines the Mo-bis(molybdopterin guanine dinucleotide) pocket.

It belongs to the FdhD family.

It localises to the cytoplasm. Functionally, required for formate dehydrogenase (FDH) activity. Acts as a sulfur carrier protein that transfers sulfur from IscS to the molybdenum cofactor prior to its insertion into FDH. This chain is Sulfur carrier protein FdhD, found in Listeria monocytogenes serovar 1/2a (strain ATCC BAA-679 / EGD-e).